The following is an 821-amino-acid chain: Envelope glycoprotein gp160 (821 aa).

Residues 1–737 are Extracellular-facing; that stretch reads MSTGNVYQEL…FTWWVQYLKW (737 aa). Cysteine 67 and cysteine 80 are joined by a disulfide. Residues asparagine 71, asparagine 98, asparagine 144, asparagine 175, asparagine 190, asparagine 215, asparagine 224, asparagine 266, asparagine 287, asparagine 333, asparagine 383, asparagine 389, asparagine 394, asparagine 423, asparagine 447, and asparagine 516 are each glycosylated (N-linked (GlcNAc...) asparagine; by host). 4 disulfide bridges follow: cysteine 127/cysteine 232, cysteine 134/cysteine 223, cysteine 139/cysteine 187, and cysteine 244/cysteine 272. A V1 region spans residues 139 to 186; sequence CQETENVSATTAKPITTPTTTSTVASSTEIYLDVDKNNTEEKVERNHV. The tract at residues 187–223 is V2; it reads CRYNITGLCRDSKEEIVTNFRGDDVKCENNTCYMNHC. The segment at 328 to 361 is V3; that stretch reads CHRKGNRSVVSTPSATGLLFYHGLEPGKNLKKGM. Cystine bridges form between cysteine 439/cysteine 499 and cysteine 446/cysteine 469. The segment at 446 to 469 is V4; the sequence is CNVTRIMRAWNDPNEKKWYPYASC. The segment at 515-526 is V5; it reads SNETKMQIKFLP. The segment at 570-590 is fusion peptide; it reads GAVILGILGLLSLAGSAMGSV. The stretch at 607 to 627 forms a coiled coil; it reads EQQKQLLKLIEQQSELLKLTI. N-linked (GlcNAc...) asparagine; by host glycans are attached at residues asparagine 669, asparagine 675, and asparagine 694. The segment at 715–736 is MPER; binding to GalCer; the sequence is KLGDLTSWASWFDFTWWVQYLK. The chain crosses the membrane as a helical span at residues 738–758; it reads GVFLVLGIIGLRILLALWNTI. The Cytoplasmic portion of the chain corresponds to 759-821; the sequence is SRFRQGYRPV…IEDLTSFARE (63 aa). A YXXV motif; contains endocytosis signal motif is present at residues 765-768; sequence YRPV. The interval 780–805 is disordered; it reads KRPDNGEEESNSLELGEHNSENLKEE. Positions 794 to 805 are enriched in basic and acidic residues; sequence LGEHNSENLKEE.

The mature envelope protein (Env) consists of a homotrimer of non-covalently associated gp120-gp41 heterodimers. The resulting complex protrudes from the virus surface as a spike. Interacts with host CD4 and CCR5. Gp120 also interacts with the C-type lectins CD209/DC-SIGN and CLEC4M/DC-SIGNR (collectively referred to as DC-SIGN(R)). In terms of assembly, the mature envelope protein (Env) consists of a homotrimer of non-covalently associated gp120-gp41 heterodimers. The resulting complex protrudes from the virus surface as a spike. Specific enzymatic cleavages in vivo yield mature proteins. Envelope glycoproteins are synthesized as an inactive precursor that is heavily N-glycosylated and processed likely by host cell furin in the Golgi to yield the mature SU and TM proteins. The cleavage site between SU and TM requires the minimal sequence [KR]-X-[KR]-R.

The protein resides in the virion membrane. The protein localises to the host cell membrane. It localises to the host endosome membrane. In terms of biological role, the surface protein gp120 (SU) attaches the virus to the host lymphoid cell by binding to the primary receptor CD4. This interaction induces a structural rearrangement creating a high affinity binding site for a chemokine coreceptor like CCR5. This peculiar 2 stage receptor-interaction strategy allows gp120 to maintain the highly conserved coreceptor-binding site in a cryptic conformation, protected from neutralizing antibodies. These changes are transmitted to the transmembrane protein gp41 and are thought to activate its fusogenic potential by unmasking its fusion peptide. Its function is as follows. Surface protein gp120 (SU) may target the virus to gut-associated lymphoid tissue (GALT) by binding host ITGA4/ITGB7 (alpha-4/beta-7 integrins), a complex that mediates T-cell migration to the GALT. Interaction between gp120 and ITGA4/ITGB7 would allow the virus to enter GALT early in the infection, infecting and killing most of GALT's resting CD4+ T-cells. This T-cell depletion is believed to be the major insult to the host immune system leading to AIDS. Functionally, the surface protein gp120 is a ligand for CD209/DC-SIGN and CLEC4M/DC-SIGNR, which are respectively found on dendritic cells (DCs), and on endothelial cells of liver sinusoids and lymph node sinuses. These interactions allow capture of viral particles at mucosal surfaces by these cells and subsequent transmission to permissive cells. DCs are professional antigen presenting cells, critical for host immunity by inducing specific immune responses against a broad variety of pathogens. They act as sentinels in various tissues where they take up antigen, process it, and present it to T-cells following migration to lymphoid organs. SIV subverts the migration properties of dendritic cells to gain access to CD4+ T-cells in lymph nodes. Virus transmission to permissive T-cells occurs either in trans (without DCs infection, through viral capture and transmission), or in cis (following DCs productive infection, through the usual CD4-gp120 interaction), thereby inducing a robust infection. In trans infection, bound virions remain infectious over days and it is proposed that they are not degraded, but protected in non-lysosomal acidic organelles within the DCs close to the cell membrane thus contributing to the viral infectious potential during DCs' migration from the periphery to the lymphoid tissues. On arrival at lymphoid tissues, intact virions recycle back to DCs' cell surface allowing virus transmission to CD4+ T-cells. Virion capture also seems to lead to MHC-II-restricted viral antigen presentation, and probably to the activation of SIV-specific CD4+ cells. The transmembrane protein gp41 (TM) acts as a class I viral fusion protein. Under the current model, the protein has at least 3 conformational states: pre-fusion native state, pre-hairpin intermediate state, and post-fusion hairpin state. During fusion of viral and target intracellular membranes, the coiled coil regions (heptad repeats) assume a trimer-of-hairpins structure, positioning the fusion peptide in close proximity to the C-terminal region of the ectodomain. The formation of this structure appears to drive apposition and subsequent fusion of viral and target cell membranes. Complete fusion occurs in host cell endosomes. The virus undergoes clathrin-dependent internalization long before endosomal fusion, thus minimizing the surface exposure of conserved viral epitopes during fusion and reducing the efficacy of inhibitors targeting these epitopes. Membranes fusion leads to delivery of the nucleocapsid into the cytoplasm. In terms of biological role, the envelope glycoprotein gp160 precursor down-modulates cell surface CD4 antigen by interacting with it in the endoplasmic reticulum and blocking its transport to the cell surface. Its function is as follows. The gp120-gp41 heterodimer allows rapid transcytosis of the virus through CD4 negative cells such as simple epithelial monolayers of the intestinal, rectal and endocervical epithelial barriers. Both gp120 and gp41 specifically recognize glycosphingolipids galactosyl-ceramide (GalCer) or 3' sulfo-galactosyl-ceramide (GalS) present in the lipid rafts structures of epithelial cells. Binding to these alternative receptors allows the rapid transcytosis of the virus through the epithelial cells. This transcytotic vesicle-mediated transport of virions from the apical side to the basolateral side of the epithelial cells does not involve infection of the cells themselves. The sequence is that of Envelope glycoprotein gp160 (env) from Cercopithecidae (Old World monkeys).